Reading from the N-terminus, the 448-residue chain is Glutamyl-tRNA reductase (448 aa).

Residues 49 to 52 (TCNR), Ser-109, 114 to 116 (ETQ), and Gln-120 each bind substrate. Cys-50 functions as the Nucleophile in the catalytic mechanism. 189–194 (GAGEMS) provides a ligand contact to NADP(+).

This sequence belongs to the glutamyl-tRNA reductase family. As to quaternary structure, homodimer.

The enzyme catalyses (S)-4-amino-5-oxopentanoate + tRNA(Glu) + NADP(+) = L-glutamyl-tRNA(Glu) + NADPH + H(+). It participates in porphyrin-containing compound metabolism; protoporphyrin-IX biosynthesis; 5-aminolevulinate from L-glutamyl-tRNA(Glu): step 1/2. Its function is as follows. Catalyzes the NADPH-dependent reduction of glutamyl-tRNA(Glu) to glutamate 1-semialdehyde (GSA). In Staphylococcus aureus (strain bovine RF122 / ET3-1), this protein is Glutamyl-tRNA reductase.